The sequence spans 319 residues: MAQRDYVRRSQPAPSRRKKSTSRKKQRNLPAVSPAMVAIAAAVLVTFIGGLYFITHHKKEESETLQSQKVTGNGLPPKPEERWRYIKELESRQPGVRAPTEPSAGGEVKTPEQLTPEQRQLLEQMQADMRQQPTQLVEVPWNEQTPEQRQQTLQRQRQAQQLAEQQRLAQQSRTTEQSWQQQTRTSQAAPVQAQPRQSKPASSQQPYQDLLQTPAHTTAQSKPQQAAPVARAADAPKPTAEKKDERRWMVQCGSFRGAEQAETVRAQLAFEGFDSKITTNNGWNRVVIGPVKGKENADSTLNRLKMAGHTNCIRLAAGG.

Residues 1 to 30 (MAQRDYVRRSQPAPSRRKKSTSRKKQRNLP) are disordered. The Cytoplasmic portion of the chain corresponds to 1–33 (MAQRDYVRRSQPAPSRRKKSTSRKKQRNLPAVS). Residues 4–6 (RDY) form a mediates interaction with FtsA region. Basic residues predominate over residues 15 to 27 (SRRKKSTSRKKQR). Residues 34–54 (PAMVAIAAAVLVTFIGGLYFI) form a helical membrane-spanning segment. Over 55 to 319 (THHKKEESET…TNCIRLAAGG (265 aa)) the chain is Periplasmic. Disordered stretches follow at residues 60 to 79 (EESE…PPKP) and 89 to 113 (LESR…TPEQ). Tandem repeats lie at residues 115–120 (TPEQRQ), 145–150 (TPEQRQ), 197–200 (QSKP), and 220–223 (QSKP). Residues 115 to 150 (TPEQRQLLEQMQADMRQQPTQLVEVPWNEQTPEQRQ) are 2 X 6 AA repeats. The tract at residues 140–245 (PWNEQTPEQR…PKPTAEKKDE (106 aa)) is disordered. Positions 143–171 (EQTPEQRQQTLQRQRQAQQLAEQQRLAQQ) are enriched in low complexity. The span at 172 to 221 (SRTTEQSWQQQTRTSQAAPVQAQPRQSKPASSQQPYQDLLQTPAHTTAQS) shows a compositional bias: polar residues. Residues 197–223 (QSKPASSQQPYQDLLQTPAHTTAQSKP) are 2 X 4 AA repeats. Residues 222–238 (KPQQAAPVARAADAPKP) show a composition bias toward low complexity. An SPOR domain is found at 242–316 (KKDERRWMVQ…AGHTNCIRLA (75 aa)). An intrachain disulfide couples C252 to C312.

This sequence belongs to the FtsN family. Interacts with FtsA via its N-terminal cytoplasmic domain. Interacts with ZapA, FtsQ, FtsW and FtsI.

It localises to the cell inner membrane. In terms of biological role, essential cell division protein that activates septal peptidoglycan synthesis and constriction of the cell. Acts on both sides of the membrane, via interaction with FtsA in the cytoplasm and interaction with the FtsQBL complex in the periplasm. These interactions may induce a conformational switch in both FtsA and FtsQBL, leading to septal peptidoglycan synthesis by FtsI and associated synthases. Required for full FtsI activity. Required for recruitment of AmiC to the septal ring. The chain is Cell division protein FtsN from Escherichia coli (strain K12).